A 387-amino-acid polypeptide reads, in one-letter code: Cytochrome b (387 aa).

Transmembrane regions (helical) follow at residues 32–52, 76–98, 113–133, and 179–199; these read FGSL…TLAM, WLVR…LHIG, TWAI…LGYV, and FFAL…MHLI. Heme b contacts are provided by histidine 82 and histidine 96. Heme b contacts are provided by histidine 183 and histidine 197. Position 202 (histidine 202) interacts with a ubiquinone. The next 4 helical transmembrane spans lie at 226–246, 290–310, 322–342, and 349–369; these read FIFK…IFVF, LLGV…PITD, LSKV…QIGA, and FIEF…VIVP.

It belongs to the cytochrome b family. As to quaternary structure, fungal cytochrome b-c1 complex contains 10 subunits; 3 respiratory subunits, 2 core proteins and 5 low-molecular weight proteins. Cytochrome b-c1 complex is a homodimer. It depends on heme b as a cofactor.

The protein localises to the mitochondrion inner membrane. In terms of biological role, component of the ubiquinol-cytochrome c reductase complex (complex III or cytochrome b-c1 complex) that is part of the mitochondrial respiratory chain. The b-c1 complex mediates electron transfer from ubiquinol to cytochrome c. Contributes to the generation of a proton gradient across the mitochondrial membrane that is then used for ATP synthesis. The sequence is that of Cytochrome b (cob) from Emericella nidulans (Aspergillus nidulans).